The sequence spans 299 residues: tRNA dimethylallyltransferase 2 (299 aa).

Position 9 to 16 (9 to 16 (GPTGVGKT)) interacts with ATP. Substrate is bound at residue 11 to 16 (TGVGKT). The tract at residues 34–37 (DSRQ) is interaction with substrate tRNA.

This sequence belongs to the IPP transferase family. As to quaternary structure, monomer. It depends on Mg(2+) as a cofactor.

The enzyme catalyses adenosine(37) in tRNA + dimethylallyl diphosphate = N(6)-dimethylallyladenosine(37) in tRNA + diphosphate. Functionally, catalyzes the transfer of a dimethylallyl group onto the adenine at position 37 in tRNAs that read codons beginning with uridine, leading to the formation of N6-(dimethylallyl)adenosine (i(6)A). The chain is tRNA dimethylallyltransferase 2 from Parabacteroides distasonis (strain ATCC 8503 / DSM 20701 / CIP 104284 / JCM 5825 / NCTC 11152).